A 302-amino-acid polypeptide reads, in one-letter code: UDP-N-acetylenolpyruvoylglucosamine reductase (302 aa).

An FAD-binding PCMH-type domain is found at 30–196 (IGGPADLFVE…IAATLEMKKG (167 aa)). Residue R174 is part of the active site. Catalysis depends on S225, which acts as the Proton donor. The active site involves E295.

This sequence belongs to the MurB family. It depends on FAD as a cofactor.

It is found in the cytoplasm. It catalyses the reaction UDP-N-acetyl-alpha-D-muramate + NADP(+) = UDP-N-acetyl-3-O-(1-carboxyvinyl)-alpha-D-glucosamine + NADPH + H(+). Its pathway is cell wall biogenesis; peptidoglycan biosynthesis. Functionally, cell wall formation. In Anoxybacillus flavithermus (strain DSM 21510 / WK1), this protein is UDP-N-acetylenolpyruvoylglucosamine reductase.